Consider the following 178-residue polypeptide: Ribosome maturation factor RimP (178 aa).

The protein belongs to the RimP family.

The protein resides in the cytoplasm. Its function is as follows. Required for maturation of 30S ribosomal subunits. This Streptococcus pyogenes serotype M4 (strain MGAS10750) protein is Ribosome maturation factor RimP.